A 122-amino-acid chain; its full sequence is UPF0102 protein BQ09720 (122 aa).

The protein belongs to the UPF0102 family.

This Bartonella quintana (strain Toulouse) (Rochalimaea quintana) protein is UPF0102 protein BQ09720.